The chain runs to 75 residues: Protein P8 (75 aa).

Residues 19-47 (PMGGMPSIASSSSAETGQQTQSGNFTGGG) are disordered. Over residues 26–39 (IASSSSAETGQQTQ) the composition is skewed to polar residues. A helical transmembrane segment spans residues 55–72 (NNQLLIVGAVVIGLFLVI).

The protein resides in the virion membrane. This chain is Protein P8 (VIII), found in Pseudoalteromonas phage PM2 (Bacteriophage PM2).